Here is a 161-residue protein sequence, read N- to C-terminus: SsrA-binding protein (161 aa).

Belongs to the SmpB family.

It localises to the cytoplasm. Required for rescue of stalled ribosomes mediated by trans-translation. Binds to transfer-messenger RNA (tmRNA), required for stable association of tmRNA with ribosomes. tmRNA and SmpB together mimic tRNA shape, replacing the anticodon stem-loop with SmpB. tmRNA is encoded by the ssrA gene; the 2 termini fold to resemble tRNA(Ala) and it encodes a 'tag peptide', a short internal open reading frame. During trans-translation Ala-aminoacylated tmRNA acts like a tRNA, entering the A-site of stalled ribosomes, displacing the stalled mRNA. The ribosome then switches to translate the ORF on the tmRNA; the nascent peptide is terminated with the 'tag peptide' encoded by the tmRNA and targeted for degradation. The ribosome is freed to recommence translation, which seems to be the essential function of trans-translation. This Vesicomyosocius okutanii subsp. Calyptogena okutanii (strain HA) protein is SsrA-binding protein.